The chain runs to 394 residues: Phosphopentomutase (394 aa).

Mn(2+)-binding residues include aspartate 13, aspartate 286, histidine 291, aspartate 327, histidine 328, and histidine 339.

Belongs to the phosphopentomutase family. The cofactor is Mn(2+).

The protein resides in the cytoplasm. It catalyses the reaction 2-deoxy-alpha-D-ribose 1-phosphate = 2-deoxy-D-ribose 5-phosphate. The enzyme catalyses alpha-D-ribose 1-phosphate = D-ribose 5-phosphate. It participates in carbohydrate degradation; 2-deoxy-D-ribose 1-phosphate degradation; D-glyceraldehyde 3-phosphate and acetaldehyde from 2-deoxy-alpha-D-ribose 1-phosphate: step 1/2. Its function is as follows. Isomerase that catalyzes the conversion of deoxy-ribose 1-phosphate (dRib-1-P) and ribose 1-phosphate (Rib-1-P) to deoxy-ribose 5-phosphate (dRib-5-P) and ribose 5-phosphate (Rib-5-P), respectively. The sequence is that of Phosphopentomutase from Bacillus cereus (strain G9842).